The chain runs to 158 residues: Transcription elongation factor GreA (158 aa).

Positions 2-70 (ENQKQYPMTQ…IEQDIQRIEH (69 aa)) form a coiled coil.

This sequence belongs to the GreA/GreB family.

Functionally, necessary for efficient RNA polymerase transcription elongation past template-encoded arresting sites. The arresting sites in DNA have the property of trapping a certain fraction of elongating RNA polymerases that pass through, resulting in locked ternary complexes. Cleavage of the nascent transcript by cleavage factors such as GreA or GreB allows the resumption of elongation from the new 3'terminus. GreA releases sequences of 2 to 3 nucleotides. The protein is Transcription elongation factor GreA of Staphylococcus epidermidis (strain ATCC 35984 / DSM 28319 / BCRC 17069 / CCUG 31568 / BM 3577 / RP62A).